The chain runs to 497 residues: Zinc metalloproteinase nas-28 (497 aa).

The N-terminal stretch at 1–14 (MFFPVVFFIPFVLG) is a signal peptide. A propeptide spanning residues 15–120 (APTQKALEKI…IENGNYRSKR (106 aa)) is cleaved from the precursor. The N-linked (GlcNAc...) asparagine glycan is linked to Asn76. The region spanning 121–319 (QAIVDTTNFW…IGVNKLYNCT (199 aa)) is the Peptidase M12A domain. Cystine bridges form between Cys164–Cys318, Cys185–Cys206, Cys328–Cys339, Cys331–Cys342, Cys344–Cys353, Cys364–Cys398, and Cys427–Cys447. Residue His214 coordinates Zn(2+). The active site involves Glu215. Positions 218 and 224 each coordinate Zn(2+). N-linked (GlcNAc...) asparagine glycosylation occurs at Asn317. Residues 324–354 (IQMKCSNCGITDSRNCNQCKCPRYFTGASCD) enclose the EGF-like domain. The 120-residue stretch at 364-483 (CNGAVLQATS…LTFSIQYRAV (120 aa)) folds into the CUB domain. Asn394 carries an N-linked (GlcNAc...) asparagine glycan.

It depends on Zn(2+) as a cofactor.

Its subcellular location is the secreted. Functionally, metalloprotease. This chain is Zinc metalloproteinase nas-28 (nas-28), found in Caenorhabditis elegans.